A 390-amino-acid polypeptide reads, in one-letter code: Transforming growth factor beta-1 proprotein (390 aa).

The N-terminal stretch at Met-1–Gly-29 is a signal peptide. The segment at Leu-30–Pro-74 is straightjacket domain. The tract at residues Glu-75–Leu-271 is arm domain. N-linked (GlcNAc...) asparagine glycans are attached at residues Asn-82, Asn-136, and Asn-176. The segment at Asp-226–Gly-252 is bowtie tail. The Cell attachment site motif lies at Arg-244–Asp-246. 4 disulfides stabilise this stretch: Cys-285–Cys-294, Cys-293–Cys-356, Cys-322–Cys-387, and Cys-326–Cys-389.

This sequence belongs to the TGF-beta family. In terms of assembly, homodimer; disulfide-linked. Interacts with the serine proteases, HTRA1 and HTRA3: the interaction with either inhibits TGFB1-mediated signaling and the HTRA protease activity is required for this inhibition. May interact with THSD4; this interaction may lead to sequestration by FBN1 microfibril assembly and attenuation of TGFB signaling. Interacts with CD109, DPT and ASPN. Interacts with EFEMP2. Interacts with TSKU; the interaction contributes to regulation of the hair cycle. Interacts with TGFBR3. As to quaternary structure, homodimer; disulfide-linked. Interacts with transforming growth factor beta-1 (TGF-beta-1) chain; interaction is non-covalent and maintains TGF-beta-1 in a latent state; each latency-associated peptide (LAP) monomer interacts with TGF-beta-1 in the other monomer. Interacts with LTBP1; leading to regulation of TGF-beta-1 activation. Interacts with LRRC32/GARP; leading to regulation of TGF-beta-1 activation on the surface of activated regulatory T-cells (Tregs). Interacts with LRRC33/NRROS; leading to regulation of TGF-beta-1 activation in macrophages and microglia. Interacts (via cell attachment site) with integrins ITGAV and ITGB6 (ITGAV:ITGB6), leading to release of the active TGF-beta-1. Interacts with NREP; the interaction results in a decrease in TGFB1 autoinduction. Interacts with HSP90AB1; inhibits latent TGFB1 activation. Homodimer; disulfide-linked. Interacts with TGF-beta receptors (TGFBR1 and TGFBR2), leading to signal transduction. In terms of processing, transforming growth factor beta-1 proprotein: The precursor proprotein is cleaved in the Golgi apparatus by FURIN to form Transforming growth factor beta-1 (TGF-beta-1) and Latency-associated peptide (LAP) chains, which remain non-covalently linked, rendering TGF-beta-1 inactive. N-glycosylated. Deglycosylation leads to activation of Transforming growth factor beta-1 (TGF-beta-1); mechanisms triggering deglycosylation-driven activation of TGF-beta-1 are however unclear.

The protein resides in the secreted. The protein localises to the extracellular space. Its subcellular location is the extracellular matrix. In terms of biological role, transforming growth factor beta-1 proprotein: Precursor of the Latency-associated peptide (LAP) and Transforming growth factor beta-1 (TGF-beta-1) chains, which constitute the regulatory and active subunit of TGF-beta-1, respectively. Its function is as follows. Required to maintain the Transforming growth factor beta-1 (TGF-beta-1) chain in a latent state during storage in extracellular matrix. Associates non-covalently with TGF-beta-1 and regulates its activation via interaction with 'milieu molecules', such as LTBP1, LRRC32/GARP and LRRC33/NRROS, that control activation of TGF-beta-1. Interaction with LRRC33/NRROS regulates activation of TGF-beta-1 in macrophages and microglia. Interaction with LRRC32/GARP controls activation of TGF-beta-1 on the surface of activated regulatory T-cells (Tregs). Interaction with integrins (ITGAV:ITGB6 or ITGAV:ITGB8) results in distortion of the Latency-associated peptide chain and subsequent release of the active TGF-beta-1. Multifunctional protein that regulates the growth and differentiation of various cell types and is involved in various processes, such as normal development, immune function, microglia function and responses to neurodegeneration. Activation into mature form follows different steps: following cleavage of the proprotein in the Golgi apparatus, Latency-associated peptide (LAP) and Transforming growth factor beta-1 (TGF-beta-1) chains remain non-covalently linked rendering TGF-beta-1 inactive during storage in extracellular matrix. At the same time, LAP chain interacts with 'milieu molecules', such as LTBP1, LRRC32/GARP and LRRC33/NRROS that control activation of TGF-beta-1 and maintain it in a latent state during storage in extracellular milieus. TGF-beta-1 is released from LAP by integrins (ITGAV:ITGB6 or ITGAV:ITGB8): integrin-binding to LAP stabilizes an alternative conformation of the LAP bowtie tail and results in distortion of the LAP chain and subsequent release of the active TGF-beta-1. Once activated following release of LAP, TGF-beta-1 acts by binding to TGF-beta receptors (TGFBR1 and TGFBR2), which transduce signal. While expressed by many cells types, TGF-beta-1 only has a very localized range of action within cell environment thanks to fine regulation of its activation by Latency-associated peptide chain (LAP) and 'milieu molecules'. Plays an important role in bone remodeling: acts as a potent stimulator of osteoblastic bone formation, causing chemotaxis, proliferation and differentiation in committed osteoblasts. Can promote either T-helper 17 cells (Th17) or regulatory T-cells (Treg) lineage differentiation in a concentration-dependent manner. At high concentrations, leads to FOXP3-mediated suppression of RORC and down-regulation of IL-17 expression, favoring Treg cell development. At low concentrations in concert with IL-6 and IL-21, leads to expression of the IL-17 and IL-23 receptors, favoring differentiation to Th17 cells. Stimulates sustained production of collagen through the activation of CREB3L1 by regulated intramembrane proteolysis (RIP). Mediates SMAD2/3 activation by inducing its phosphorylation and subsequent translocation to the nucleus. Positively regulates odontoblastic differentiation in dental papilla cells, via promotion of IPO7-mediated translocation of phosphorylated SMAD2 to the nucleus and subsequent transcription of target genes. Can induce epithelial-to-mesenchymal transition (EMT) and cell migration in various cell types. The protein is Transforming growth factor beta-1 proprotein (TGFB1) of Canis lupus familiaris (Dog).